Reading from the N-terminus, the 447-residue chain is GTPase Der (447 aa).

2 EngA-type G domains span residues 4 to 165 and 180 to 357; these read QIIA…PKEK and VQIV…KNWN. GTP is bound by residues 10–17, 57–61, 119–122, 186–193, 233–237, and 298–301; these read GRPNVGKS, DTPGL, NKCE, GRPNAGKS, DTAGL, and NKWD. The KH-like domain maps to 358–443; sequence KKITTSKLNE…PIRFAYVKTK (86 aa).

It belongs to the TRAFAC class TrmE-Era-EngA-EngB-Septin-like GTPase superfamily. EngA (Der) GTPase family. As to quaternary structure, associates with the 50S ribosomal subunit.

Its function is as follows. GTPase that plays an essential role in the late steps of ribosome biogenesis. The sequence is that of GTPase Der from Rickettsia canadensis (strain McKiel).